The chain runs to 630 residues: Phosphatidylinositol 4-kinase gamma 5 (630 aa).

One can recognise a Ubiquitin-like; degenerate domain in the interval 41-98 (RRVFVQTETGCVLGLELDRSDNAHTVKRKLQVALNFPIEESSLTFGDLVLKNDLTAVR). The PI3K/PI4K catalytic domain maps to 162-459 (GIDPVAVNSG…LIGEKDAESP (298 aa)). A G-loop region spans residues 168–174 (VNSGLGG). ATP is bound by residues 169–175 (NSGLGGA), K190, and 279–282 (QQFI). Positions 312–320 (LNTDRHSGN) are catalytic loop. The activation loop stretch occupies residues 339-365 (PIDHGLCLPETLEDPYFEWIHWPQASI). ATP is bound at residue D341. The interval 500–527 (LSKVEETTEDGEEEEEEDREEEENDRAD) is disordered. The segment covering 506–524 (TTEDGEEEEEEDREEEEND) has biased composition (acidic residues). S571 is subject to Phosphoserine.

Belongs to the PI3/PI4-kinase family. Type II PI4K subfamily. In terms of assembly, interacts with AHK2.

The catalysed reaction is a 1,2-diacyl-sn-glycero-3-phospho-(1D-myo-inositol) + ATP = a 1,2-diacyl-sn-glycero-3-phospho-(1D-myo-inositol 4-phosphate) + ADP + H(+). In terms of biological role, the phosphorylation of phosphatidylinositol (PI) to PI4P is the first committed step in the generation of phosphatidylinositol 4,5-bisphosphate (PIP2), a precursor of the second messenger inositol 1,4,5-trisphosphate (InsP3). This chain is Phosphatidylinositol 4-kinase gamma 5 (PI4KG5), found in Arabidopsis thaliana (Mouse-ear cress).